We begin with the raw amino-acid sequence, 457 residues long: Cystathionine beta-lyase, chloroplastic (457 aa).

The transit peptide at 1–51 (MFSRPFVTPVTIDLQVKSITAGNMWEGLGFYKPANSKSNQMICSKGFRLNC) directs the protein to the chloroplast. 6 residues coordinate pyridoxal 5'-phosphate: tyrosine 120, arginine 122, glycine 150, methionine 151, serine 268, and threonine 270. N6-(pyridoxal phosphate)lysine is present on lysine 271.

This sequence belongs to the trans-sulfuration enzymes family. As to quaternary structure, forms homodimers. May form homotetramers from two homodimers. The cofactor is pyridoxal 5'-phosphate.

The protein resides in the plastid. The protein localises to the chloroplast. It carries out the reaction L,L-cystathionine + H2O = L-homocysteine + pyruvate + NH4(+). The catalysed reaction is an S-substituted L-cysteine + H2O = a thiol + pyruvate + NH4(+). Catalyzes the degradation of cystathionine. In Mimosa pudica (Sensitive plant), this protein is Cystathionine beta-lyase, chloroplastic.